A 632-amino-acid chain; its full sequence is PTS system mannitol-specific EIICBA component (632 aa).

The 330-residue stretch at 12–341 (FGRFLSNMIM…ILLKYDFNTI (330 aa)) folds into the PTS EIIC type-2 domain. 6 helical membrane-spanning segments follow: residues 24–45 (ISIF…WQPN), 50–70 (QLIS…TGGS), 134–155 (SLAI…PFIE), 165–185 (IQII…EPAK), 273–292 (LILG…GGLI), and 313–334 (FSNI…SILL). Residues 374 to 469 (KTIIVACDAG…KLVENMVFLY (96 aa)) form the PTS EIIB type-2 domain. The active-site Phosphocysteine intermediate; for EIIB activity is C380. C380 is subject to Phosphocysteine; by EIIA. Positions 488–630 (FQLNEENIIL…KEALSLLTME (143 aa)) constitute a PTS EIIA type-2 domain. The active-site Tele-phosphohistidine intermediate; for EIIA activity is H548. H548 bears the Phosphohistidine; by HPr mark.

Homodimer. An intramolecular phosphotransfer takes places between His-548 and Cys-380.

The protein localises to the cell inner membrane. It catalyses the reaction D-mannitol(out) + N(pros)-phospho-L-histidyl-[protein] = D-mannitol 1-phosphate(in) + L-histidyl-[protein]. In terms of biological role, the phosphoenolpyruvate-dependent sugar phosphotransferase system (sugar PTS), a major carbohydrate active transport system, catalyzes the phosphorylation of incoming sugar substrates concomitantly with their translocation across the cell membrane. This system is involved in D-mannitol transport. This chain is PTS system mannitol-specific EIICBA component (mtlA), found in Buchnera aphidicola subsp. Acyrthosiphon pisum (strain APS) (Acyrthosiphon pisum symbiotic bacterium).